The chain runs to 430 residues: tRNA(Ile)-lysidine synthase (430 aa).

Residue 27-32 (SGGSDS) coordinates ATP.

The protein belongs to the tRNA(Ile)-lysidine synthase family.

The protein resides in the cytoplasm. The catalysed reaction is cytidine(34) in tRNA(Ile2) + L-lysine + ATP = lysidine(34) in tRNA(Ile2) + AMP + diphosphate + H(+). Ligates lysine onto the cytidine present at position 34 of the AUA codon-specific tRNA(Ile) that contains the anticodon CAU, in an ATP-dependent manner. Cytidine is converted to lysidine, thus changing the amino acid specificity of the tRNA from methionine to isoleucine. The chain is tRNA(Ile)-lysidine synthase from Rickettsia bellii (strain RML369-C).